Consider the following 357-residue polypeptide: Chaperone protein DnaJ (357 aa).

In terms of domain architecture, J spans 4–69 (DYYAILGVDR…QKRKQYDETG (66 aa)). The CR-type zinc finger occupies 132-213 (GASKNVKYRR…CHGTGTVSKN (82 aa)). Residues Cys145, Cys148, Cys161, Cys164, Cys187, Cys190, Cys201, and Cys204 each coordinate Zn(2+). CXXCXGXG motif repeat units follow at residues 145-152 (CEHCSGTG), 161-168 (CPTCHGSG), 187-194 (CRTCHGRG), and 201-208 (CTVCHGTG).

It belongs to the DnaJ family. Homodimer. It depends on Zn(2+) as a cofactor.

Its subcellular location is the cytoplasm. Participates actively in the response to hyperosmotic and heat shock by preventing the aggregation of stress-denatured proteins and by disaggregating proteins, also in an autonomous, DnaK-independent fashion. Unfolded proteins bind initially to DnaJ; upon interaction with the DnaJ-bound protein, DnaK hydrolyzes its bound ATP, resulting in the formation of a stable complex. GrpE releases ADP from DnaK; ATP binding to DnaK triggers the release of the substrate protein, thus completing the reaction cycle. Several rounds of ATP-dependent interactions between DnaJ, DnaK and GrpE are required for fully efficient folding. Also involved, together with DnaK and GrpE, in the DNA replication of plasmids through activation of initiation proteins. The sequence is that of Chaperone protein DnaJ from Picrophilus torridus (strain ATCC 700027 / DSM 9790 / JCM 10055 / NBRC 100828 / KAW 2/3).